Reading from the N-terminus, the 509-residue chain is Cytochrome P450 monooxygenase cpaH (509 aa).

A glycan (N-linked (GlcNAc...) asparagine) is linked at N15. The helical transmembrane segment at T31–L51 threads the bilayer. Residues N306 and N412 are each glycosylated (N-linked (GlcNAc...) asparagine). C453 is a binding site for heme.

This sequence belongs to the cytochrome P450 family. Heme serves as cofactor.

The protein resides in the membrane. It functions in the pathway secondary metabolite biosynthesis. Functionally, cytochrome P450 monooxygenase; part of the gene cluster that mediates the biosynthesis of the fungal neurotoxin cyclopiazonic acid (CPA), a nanomolar inhibitor of Ca(2+)-ATPase with a unique pentacyclic indole tetramic acid scaffold. The hybrid two module polyketide synthase-nonribosomal peptide synthetase (PKS-NRPS) cpaS incorporates acetyl-CoA, malonyl-CoA, and tryptophan (Trp) and utilizes a C-terminal redox-incompetent reductase domain to make and release the tryptophan tetramic acid, cyclo-acetoacetyl-L-tryptophan (c-AATrp), as the first intermediate in the pathway. CpaS catalyzes a Dieckmann-type cyclization on the N-acetoacetyl-Trp intermediate bound in thioester linkage to the phosphopantetheinyl arm of the T domain to form and release c-AATrp. CpaD then regiospecifically dimethylallylates c-AATrp to form beta-cyclopiazonic acid. CpaD discriminates against free Trp but accepts tryptophan-containing thiohydantoins, diketopiperazines, and linear peptides as substrates for C4-prenylation and also acts as a regiospecific O-dimethylallyltransferase (DMAT) on a tyrosine-derived tetramic acid. The beta-cyclopiazonate dehydrogenase cpaO then carries out the dehydrogenation of beta-CPA to yield an unstable enimine product, which is captured by intramolecular cyclization to create the pentacyclic fused scaffold of alpha-cyclopiazonate. Finally, the cytochrome P450 monooxygenase cpaH mediates the conversion of CPA into the less toxic 2-oxocyclopiazonic acid, the end product of the CPA pathway in A.oryza. This chain is Cytochrome P450 monooxygenase cpaH, found in Aspergillus oryzae (Yellow koji mold).